The following is a 298-amino-acid chain: Probable phosphite transport system-binding protein HtxB (298 aa).

The first 33 residues, 1-33, serve as a signal peptide directing secretion; that stretch reads MQVFTLFSKFKKALTRAILAFIATIIVCTPAQA.

This sequence belongs to the phosphate/phosphite/phosphonate binding protein family.

In terms of biological role, probably forms part of a binding-protein-dependent hypophosphite transporter. In Stutzerimonas stutzeri (Pseudomonas stutzeri), this protein is Probable phosphite transport system-binding protein HtxB (htxB).